Reading from the N-terminus, the 229-residue chain is Ribonuclease 3 (229 aa).

The RNase III domain maps to 5–127 (LSRLERQLGY…LIGAIYLDAG (123 aa)). E40 contributes to the Mg(2+) binding site. The active site involves D44. Residues D113 and E116 each coordinate Mg(2+). E116 is a catalytic residue. The DRBM domain maps to 154-224 (DPKTRLQEFL…AAAALIALGV (71 aa)).

Belongs to the ribonuclease III family. Homodimer. Mg(2+) serves as cofactor.

It localises to the cytoplasm. The enzyme catalyses Endonucleolytic cleavage to 5'-phosphomonoester.. Digests double-stranded RNA. Involved in the processing of primary rRNA transcript to yield the immediate precursors to the large and small rRNAs (23S and 16S). Processes some mRNAs, and tRNAs when they are encoded in the rRNA operon. Processes pre-crRNA and tracrRNA of type II CRISPR loci if present in the organism. In Pseudomonas fluorescens (strain ATCC BAA-477 / NRRL B-23932 / Pf-5), this protein is Ribonuclease 3.